The chain runs to 243 residues: Adapter protein MecA (243 aa).

The interval 119–140 (NQVEDGQGIAHNPTKDTNDLDP) is disordered.

The protein belongs to the MecA family. As to quaternary structure, homodimer.

Enables the recognition and targeting of unfolded and aggregated proteins to the ClpC protease or to other proteins involved in proteolysis. In Lactiplantibacillus plantarum (strain ATCC BAA-793 / NCIMB 8826 / WCFS1) (Lactobacillus plantarum), this protein is Adapter protein MecA.